A 427-amino-acid chain; its full sequence is Glutamate-1-semialdehyde 2,1-aminomutase (427 aa).

Lysine 265 is subject to N6-(pyridoxal phosphate)lysine.

Belongs to the class-III pyridoxal-phosphate-dependent aminotransferase family. HemL subfamily. In terms of assembly, homodimer. The cofactor is pyridoxal 5'-phosphate.

It is found in the cytoplasm. The catalysed reaction is (S)-4-amino-5-oxopentanoate = 5-aminolevulinate. It functions in the pathway porphyrin-containing compound metabolism; protoporphyrin-IX biosynthesis; 5-aminolevulinate from L-glutamyl-tRNA(Glu): step 2/2. This is Glutamate-1-semialdehyde 2,1-aminomutase from Edwardsiella ictaluri (strain 93-146).